We begin with the raw amino-acid sequence, 236 residues long: Purine nucleoside phosphorylase DeoD-type (236 aa).

His-5 serves as a coordination point for a purine D-ribonucleoside. Phosphate contacts are provided by residues Gly-21, Arg-25, Arg-44, and 88 to 91; that span reads RVGT. A purine D-ribonucleoside contacts are provided by residues 180–182 and 204–205; these read EME and SD. Residue Asp-205 is the Proton donor of the active site.

Belongs to the PNP/UDP phosphorylase family. Homohexamer; trimer of homodimers.

It carries out the reaction a purine D-ribonucleoside + phosphate = a purine nucleobase + alpha-D-ribose 1-phosphate. The catalysed reaction is a purine 2'-deoxy-D-ribonucleoside + phosphate = a purine nucleobase + 2-deoxy-alpha-D-ribose 1-phosphate. Its function is as follows. Catalyzes the reversible phosphorolytic breakdown of the N-glycosidic bond in the beta-(deoxy)ribonucleoside molecules, with the formation of the corresponding free purine bases and pentose-1-phosphate. The polypeptide is Purine nucleoside phosphorylase DeoD-type (Shewanella amazonensis (strain ATCC BAA-1098 / SB2B)).